Reading from the N-terminus, the 141-residue chain is HTH-type transcriptional repressor NsrR (141 aa).

In terms of domain architecture, HTH rrf2-type spans 2–129; the sequence is QLTSFTDYAL…DDCSIAELLD (128 aa). The segment at residues 28–51 is a DNA-binding region (H-T-H motif); it reads ITDVTELFGVSRNHMVKVINRLGQ. [2Fe-2S] cluster contacts are provided by C91, C96, and C102.

The cofactor is [2Fe-2S] cluster.

Functionally, nitric oxide-sensitive repressor of genes involved in protecting the cell against nitrosative stress. May require iron for activity. The protein is HTH-type transcriptional repressor NsrR of Vibrio vulnificus (strain CMCP6).